The primary structure comprises 372 residues: Queuine tRNA-ribosyltransferase (372 aa).

Asp-89 serves as the catalytic Proton acceptor. Substrate-binding positions include 89–93 (DSGGF), Asp-161, and Gly-232. Residues 262–268 (GIGDLPS) form an RNA binding region. Asp-281 acts as the Nucleophile in catalysis. Residues 286-290 (TKAAR) form an RNA binding; important for wobble base 34 recognition region. 4 residues coordinate Zn(2+): Cys-319, Cys-321, Cys-324, and His-351.

It belongs to the queuine tRNA-ribosyltransferase family. In terms of assembly, homodimer. Within each dimer, one monomer is responsible for RNA recognition and catalysis, while the other monomer binds to the replacement base PreQ1. The cofactor is Zn(2+).

It carries out the reaction 7-aminomethyl-7-carbaguanine + guanosine(34) in tRNA = 7-aminomethyl-7-carbaguanosine(34) in tRNA + guanine. The protein operates within tRNA modification; tRNA-queuosine biosynthesis. Catalyzes the base-exchange of a guanine (G) residue with the queuine precursor 7-aminomethyl-7-deazaguanine (PreQ1) at position 34 (anticodon wobble position) in tRNAs with GU(N) anticodons (tRNA-Asp, -Asn, -His and -Tyr). Catalysis occurs through a double-displacement mechanism. The nucleophile active site attacks the C1' of nucleotide 34 to detach the guanine base from the RNA, forming a covalent enzyme-RNA intermediate. The proton acceptor active site deprotonates the incoming PreQ1, allowing a nucleophilic attack on the C1' of the ribose to form the product. After dissociation, two additional enzymatic reactions on the tRNA convert PreQ1 to queuine (Q), resulting in the hypermodified nucleoside queuosine (7-(((4,5-cis-dihydroxy-2-cyclopenten-1-yl)amino)methyl)-7-deazaguanosine). The protein is Queuine tRNA-ribosyltransferase of Chlamydia abortus (strain DSM 27085 / S26/3) (Chlamydophila abortus).